The chain runs to 189 residues: Ion-translocating oxidoreductase complex subunit B (189 aa).

A hydrophobic region spans residues 1–26 (MSGIFIAIILLTILALLFGILLGFAA). Residues 32-90 (EGDPLVDQLEALLPQTQCGQCGYPGCRPYAEAIANGEKINLCPPGGSATMEKLAEMAGV) form the 4Fe-4S domain. [4Fe-4S] cluster contacts are provided by Cys49, Cys52, Cys57, Cys73, Cys114, Cys117, Cys120, Cys124, Cys144, Cys147, Cys150, and Cys154. 4Fe-4S ferredoxin-type domains lie at 105 to 134 (KVAY…GSGK) and 135 to 164 (LMHT…MLPV).

It belongs to the 4Fe4S bacterial-type ferredoxin family. RnfB subfamily. The complex is composed of six subunits: RnfA, RnfB, RnfC, RnfD, RnfE and RnfG. The cofactor is [4Fe-4S] cluster.

It localises to the cell inner membrane. Functionally, part of a membrane-bound complex that couples electron transfer with translocation of ions across the membrane. The polypeptide is Ion-translocating oxidoreductase complex subunit B (Shewanella sediminis (strain HAW-EB3)).